A 246-amino-acid chain; its full sequence is uncharacterized protein (246 aa).

The next 6 membrane-spanning stretches (helical) occupy residues 7 to 27, 50 to 70, 99 to 119, 135 to 155, 163 to 183, and 219 to 239; these read KVTLVSLILMAVFQFFMALII, LNILLQALTIVIAATIVSMEF, VSFYLYLAYYILALLFGLLFF, LALIGSNWLEAVMMGLFGLLC, AVAVVVSFVVLYGASTLVQLM, and FSIGILIIHAIFFIVVGWWCF.

It is found in the cell membrane. This is an uncharacterized protein from Bacillus subtilis (strain 168).